The following is an 842-amino-acid chain: Outer membrane usher protein AggC (842 aa).

A signal peptide spans 1–21 (MKTSSFIIVILLCFRIENVIA). An intrachain disulfide couples Cys-819 to Cys-841.

The protein belongs to the fimbrial export usher family.

The protein resides in the cell outer membrane. Involved in the export and assembly of the AAF/I fimbriae subunits across the outer membrane. The sequence is that of Outer membrane usher protein AggC (aggC) from Escherichia coli.